The primary structure comprises 461 residues: General transcription and DNA repair factor IIH subunit SSL1 (461 aa).

The tract at residues 1-70 (MAPVVISESE…RLSNRNLQGS (70 aa)) is disordered. Over residues 26-37 (VHFDGEGDDRVD) the composition is skewed to basic and acidic residues. Residues 53 to 63 (HVQRKKKKRLS) show a composition bias toward basic residues. The region spanning 125–304 (SLILTLDCSE…THLKELFNEA (180 aa)) is the VWFA domain. A C4-type zinc finger spans residues 349-366 (CPNCHSKVCSLPTVCPCC).

This sequence belongs to the GTF2H2 family. In terms of assembly, component of the 7-subunit TFIIH core complex composed of XPB/SSL2, XPD/RAD3, SSL1, TFB1, TFB2, TFB4 and TFB5, which is active in NER. The core complex associates with the 3-subunit CTD-kinase module TFIIK composed of CCL1, KIN28 and TFB3 to form the 10-subunit holoenzyme (holo-TFIIH) active in transcription. An additionnal subunit, TFB6, plays a role in the dissociation of the SSL2 helicase from TFIIH after transcription initiation.

Its subcellular location is the nucleus. Its function is as follows. Component of the general transcription and DNA repair factor IIH (TFIIH) core complex, which is involved in general and transcription-coupled nucleotide excision repair (NER) of damaged DNA and, when complexed to TFIIK, in RNA transcription by RNA polymerase II. In NER, TFIIH acts by opening DNA around the lesion to allow the excision of the damaged oligonucleotide and its replacement by a new DNA fragment. In transcription, TFIIH has an essential role in transcription initiation. When the pre-initiation complex (PIC) has been established, TFIIH is required for promoter opening and promoter escape. Phosphorylation of the C-terminal tail (CTD) of the largest subunit of RNA polymerase II by the kinase module TFIIK controls the initiation of transcription. The polypeptide is General transcription and DNA repair factor IIH subunit SSL1 (SSL1) (Saccharomyces cerevisiae (strain ATCC 204508 / S288c) (Baker's yeast)).